The primary structure comprises 601 residues: MLRTSPAGSLRAEHTAQVVTLTGWVDRRRDHGGVAFIDLRDASGIAQVVIRDEAVAHPLRNEFVLQVTGEVSRRPAGNENPNLPTGEIEVVASDVVVLNSAAALPFQVSTALADTEAIGEEVRLKYRYLDLRRPAPARAIRLRAKANQAARRVLDAEEFVEIETPTLTRSTPEGARDFLVPARLAPGSWYALPQSPQLFKQLLMVAGMERYYQIARCYRDEDFRADRQPEFTQLDVEMSFVEQDDVIALAEKVLVALWELIGFTIPTPIPRMTFDDAMRLYGTDKPDLRFGNPIVELTSYFADTPFRVFQSEYVGAVVMAGGASLPRRQFDAWQEWAKQRGARGLAYVTFPEDGSDLGGPVAKNLSDAERAGLREATGAAPGDAVFFAAGATTPSRALLGAARQEIAKRTGLIDSADQEGAWAFVWVVDAPLFKPTGDAADDGDVALGHSAWTAVHHAFTSPTPEWIDTFEQDPGSALSNAYDIVCNGNEIGGGSIRIHRRDVQERVFQVMGIDAAEAQEKFGFLLDAFSYGAPPHGGIAFGWDRILALLTGSESIREVIAFPKSGGGYDPLTQAPAPITAEQRRESGVDAVPDDETAPQA.

Glu173 lines the L-aspartate pocket. The aspartate stretch occupies residues 197-200 (QLFK). Arg219 is a binding site for L-aspartate. ATP is bound by residues 219-221 (RDE) and Gln228. His456 serves as a coordination point for L-aspartate. Position 490 (Glu490) interacts with ATP. Arg497 provides a ligand contact to L-aspartate. Residue 542–545 (GWDR) participates in ATP binding. Positions 566–601 (GGGYDPLTQAPAPITAEQRRESGVDAVPDDETAPQA) are disordered. Positions 592 to 601 (VPDDETAPQA) are enriched in acidic residues.

It belongs to the class-II aminoacyl-tRNA synthetase family. Type 1 subfamily. In terms of assembly, homodimer.

The protein localises to the cytoplasm. The enzyme catalyses tRNA(Asx) + L-aspartate + ATP = L-aspartyl-tRNA(Asx) + AMP + diphosphate. In terms of biological role, aspartyl-tRNA synthetase with relaxed tRNA specificity since it is able to aspartylate not only its cognate tRNA(Asp) but also tRNA(Asn). Reaction proceeds in two steps: L-aspartate is first activated by ATP to form Asp-AMP and then transferred to the acceptor end of tRNA(Asp/Asn). The sequence is that of Aspartate--tRNA(Asp/Asn) ligase from Beutenbergia cavernae (strain ATCC BAA-8 / DSM 12333 / CCUG 43141 / JCM 11478 / NBRC 16432 / NCIMB 13614 / HKI 0122).